The following is a 464-amino-acid chain: L-aspartate oxidase (464 aa).

FAD is bound by residues 8-11 and 37-44; these read SGLA and NSYLAQAG. Residue Arg248 is the Proton donor/acceptor of the active site. FAD-binding positions include Glu329 and 345–346; that span reads SL.

The protein belongs to the FAD-dependent oxidoreductase 2 family. NadB subfamily. FAD is required as a cofactor.

The protein resides in the cytoplasm. It carries out the reaction L-aspartate + O2 = iminosuccinate + H2O2. It functions in the pathway cofactor biosynthesis; NAD(+) biosynthesis; iminoaspartate from L-aspartate (oxidase route): step 1/1. Its function is as follows. Catalyzes the oxidation of L-aspartate to iminoaspartate, the first step in the de novo biosynthesis of NAD(+). The protein is L-aspartate oxidase (nadB) of Pyrococcus furiosus (strain ATCC 43587 / DSM 3638 / JCM 8422 / Vc1).